A 588-amino-acid chain; its full sequence is Serine/threonine-protein kinase CBK1 (588 aa).

Disordered regions lie at residues 1–76 (MTDK…HQQQ) and 100–139 (QHQQQQQQPQQQSVAQQQPSDYVNFTPRPDLLSKTARDRA). The segment covering 29-42 (LYQQNSNQSNTSLD) has biased composition (polar residues). Low complexity-rich tracts occupy residues 43 to 76 (QQQQFNQQQYNSQQQYQQQQHSQYQQQQQQHQQQ) and 100 to 117 (QHQQQQQQPQQQSVAQQQ). The Protein kinase domain occupies 207 to 517 (FVTVKVIGKG…ANEIKSHPFF (311 aa)). ATP is bound by residues 213–221 (IGKGAFGEV) and K236. Residue D330 is the Proton acceptor of the active site. The interval 370 to 389 (GTSSNPATQMGPPQNTNRQS) is disordered. The region spanning 518-586 (RGVDWSSIRE…SRFDNMTRRN (69 aa)) is the AGC-kinase C-terminal domain.

It belongs to the protein kinase superfamily. STE Ser/Thr protein kinase family. COT1 subfamily.

It carries out the reaction L-seryl-[protein] + ATP = O-phospho-L-seryl-[protein] + ADP + H(+). It catalyses the reaction L-threonyl-[protein] + ATP = O-phospho-L-threonyl-[protein] + ADP + H(+). Its function is as follows. Protein kinase that seems to play a role in the regulation of cell morphogenesis and proliferation. The chain is Serine/threonine-protein kinase CBK1 (CBK1) from Yarrowia lipolytica (strain CLIB 122 / E 150) (Yeast).